We begin with the raw amino-acid sequence, 476 residues long: Ribulose bisphosphate carboxylase large chain (476 aa).

Residues asparagine 124 and threonine 174 each contribute to the substrate site. The active-site Proton acceptor is lysine 176. A substrate-binding site is contributed by lysine 178. Residues lysine 202, aspartate 204, and glutamate 205 each coordinate Mg(2+). At lysine 202 the chain carries N6-carboxylysine. The active-site Proton acceptor is the histidine 295. Substrate-binding residues include arginine 296, histidine 328, and serine 380.

It belongs to the RuBisCO large chain family. Type I subfamily. In terms of assembly, heterohexadecamer of 8 large chains and 8 small chains; disulfide-linked. The disulfide link is formed within the large subunit homodimers. Mg(2+) is required as a cofactor. Post-translationally, the disulfide bond which can form in the large chain dimeric partners within the hexadecamer appears to be associated with oxidative stress and protein turnover.

The protein localises to the carboxysome. The catalysed reaction is 2 (2R)-3-phosphoglycerate + 2 H(+) = D-ribulose 1,5-bisphosphate + CO2 + H2O. It catalyses the reaction D-ribulose 1,5-bisphosphate + O2 = 2-phosphoglycolate + (2R)-3-phosphoglycerate + 2 H(+). Functionally, ruBisCO catalyzes two reactions: the carboxylation of D-ribulose 1,5-bisphosphate, the primary event in carbon dioxide fixation, as well as the oxidative fragmentation of the pentose substrate in the photorespiration process. Both reactions occur simultaneously and in competition at the same active site. This is Ribulose bisphosphate carboxylase large chain from Nostoc punctiforme (strain ATCC 29133 / PCC 73102).